A 1451-amino-acid polypeptide reads, in one-letter code: Fanconi anemia group D2 protein (1451 aa).

Residues 1 to 37 (MVSKRRLSKSEDKESLTEDASKTRKQPLSKKTKKSHI) form a disordered region. The segment at 1 to 291 (MVSKRRLSKS…IKFILHSVTA (291 aa)) is interaction with FANCE. Phosphoserine is present on serine 8. Positions 8-22 (SKSEDKESLTEDASK) are enriched in basic and acidic residues. Residues 23-36 (TRKQPLSKKTKKSH) are compositionally biased toward basic residues. Serine 222 is subject to Phosphoserine; by ATM. The interaction with BRCA2 stretch occupies residues 248–359 (VLSSLRLDPN…IKSAIRYEKT (112 aa)). Lysine 561 participates in a covalent cross-link: Glycyl lysine isopeptide (Lys-Gly) (interchain with G-Cter in ubiquitin). 3 positions are modified to phosphoserine: serine 592, serine 594, and serine 717. The tract at residues 868-906 (IERKQKTDGSKTSSSDTLSEEKNSECDPTPSHRGQLNKE) is disordered. The residue at position 1257 (serine 1257) is a Phosphoserine. Residues 1396-1451 (GEEIKSQNSQESTADESEDDMSSQASKSKATEDGEEDEVSAGEKEQDSDESYDDSD) are disordered. Phosphoserine; by ATM occurs at positions 1401 and 1404. Residues serine 1412 and serine 1423 each carry the phosphoserine modification. Residue threonine 1426 is modified to Phosphothreonine. Over residues 1428–1451 (DGEEDEVSAGEKEQDSDESYDDSD) the composition is skewed to acidic residues. At serine 1435 the chain carries Phosphoserine.

It belongs to the Fanconi anemia protein FANCD2 family. In terms of assembly, homodimer; cannot be ubiquitinated and does not bind DNA. Part of a FANCI-FANCD2 heterodimeric complex that binds and scans dsDNA for DNA damage. Interacts directly with FANCE and FANCI. Interacts with USP1 and MEN1. The ubiquitinated form specifically interacts with BRCA1 and BLM. Both the nonubiquitinated and the monoubiquitinated forms interact with BRCA2; this interaction is mediated by phosphorylated FANCG and the complex also includes XCCR3. The ubiquitinated form specifically interacts with MTMR15/FAN1 (via UBZ-type zinc finger), leading to recruit MTMR15/FAN1 to sites of DNA damage. Interacts with DCLRE1B/Apollo. Interacts with POLN. Interacts with UHRF1 and UHRF2; these interactions promote FANCD2 activation. Monoubiquitinated on Lys-561 during S phase and upon genotoxic stress by FANCL in complex with E2 ligases UBE2T or UBE2W (isoform 1 and isoform 2). Deubiquitinated by USP1 as cells enter G2/M, or once DNA repair is completed. Monoubiquitination requires the joint intervention of the FANC core complex, including FANCA, FANCB, FANCC, FANCE, FANCF, FANCG, and FANCM, and proteins involved in cell cycle checkpoints and DNA repair, including RPA1, ATR, CHEK1 and BRCA1, and is mediated by FANCL/PHF9. Monoubiquitination prevents DNA release from the FANCI-FANCD2 complex. FANCD2 is only ubiquitinated in the FANCI-FANCD2 complex and the monoubiquitination of FANCD2 is promoted by phosphorylation of FANCI. Ubiquitination is required for binding to chromatin, interaction with BRCA1, BRCA2 and MTMR15/FAN1, DNA repair, and normal cell cycle progression, but not for phosphorylation on Ser-222 or interaction with MEN1. In terms of processing, phosphorylated in response to various genotoxic stresses by ATM and/or ATR. Upon ionizing radiation, phosphorylated by ATM on Ser-222 and Ser-1404. Phosphorylation on Ser-222 is required for S-phase checkpoint activation, but not for ubiquitination, foci formation, or DNA repair. In contrast, phosphorylation by ATR on other sites may be required for ubiquitination and foci formation. In terms of tissue distribution, highly expressed in germinal center cells of the spleen, tonsil, and reactive lymph nodes, and in the proliferating basal layer of squamous epithelium of tonsil, esophagus, oropharynx, larynx and cervix. Expressed in cytotrophoblastic cells of the placenta and exocrine cells of the pancreas (at protein level). Highly expressed in testis, where expression is restricted to maturing spermatocytes.

The protein localises to the nucleus. In terms of biological role, required for maintenance of chromosomal stability. Promotes accurate and efficient pairing of homologs during meiosis. Involved in the repair of DNA double-strand breaks, both by homologous recombination and single-strand annealing. The FANCI-FANCD2 complex binds and scans double-stranded DNA (dsDNA) for DNA damage; this complex stalls at DNA junctions between double-stranded DNA and single-stranded DNA. May participate in S phase and G2 phase checkpoint activation upon DNA damage. Plays a role in preventing breakage and loss of missegregating chromatin at the end of cell division, particularly after replication stress. Required for the targeting, or stabilization, of BLM to non-centromeric abnormal structures induced by replicative stress. Promotes BRCA2/FANCD1 loading onto damaged chromatin. May also be involved in B-cell immunoglobulin isotype switching. The protein is Fanconi anemia group D2 protein (FANCD2) of Homo sapiens (Human).